The sequence spans 133 residues: Salivary cystatin-L (133 aa).

An N-terminal signal peptide occupies residues 1-19 (MTSTFALVLLLGGMAVCVA). The Cystatin domain maps to 30 to 118 (ANHQANPEFL…RTCTTVVFEN (89 aa)). Cystine bridges form between C89/C100 and C111/C130.

Belongs to the cystatin family. In terms of assembly, monomer. Can form homodimers in vitro, but probably not in vivo. Homodimers are predicted to be inactive; dimerization disrupts the interaction with target proteases. As to expression, detected in saliva (at protein level). Detected in salivary gland and midgut.

Its subcellular location is the secreted. Its function is as follows. Contributes to the suppression of the host's immune response to tick salivary proteins and is important for successful feeding on hosts. Inhibitor of cysteine proteinases. Inhibits host papain and cathepsin L (CTSL) (in vitro). Inhibits host cathepsin S (CTSS) (in vitro). Inhibits host CTSV and CTSC, but to a lesser degree (in vitro). Inhibits host immune responses via its inhibition of host cathepsins. Inhibits differentiation of host dendritic cells. Inhibits proliferation of host T-cells in response to antigen stimulus. Down-regulates IL1B production by host mast cells, and this then leads to impaired activation of IL1R1, resulting in decreased IL9 production. Inhibits host inflammatory reactions and recruitment of host neutrophils. Attenuates IFN-beta (IFNB1)-triggered JAK/STAT signaling pathway in mouse dendritic cells. Functionally, (Microbial infection) Down-regulates TLR2-mediated host responses to infection by Borrelia burgdorferi and the production of the chemokine CCL3 by host dendritic cells. Down-regulates host responses to infection by B.burgdorferi and the production of IFNB1 by host dendritic cells. The protein is Salivary cystatin-L of Ixodes scapularis (Black-legged tick).